The chain runs to 272 residues: Phosphate import ATP-binding protein PstB (272 aa).

Positions 18–257 (VSIQNATISY…FNDTDKIFNA (240 aa)) constitute an ABC transporter domain. 50–57 (GPSGCGKS) provides a ligand contact to ATP.

It belongs to the ABC transporter superfamily. Phosphate importer (TC 3.A.1.7) family. The complex is composed of two ATP-binding proteins (PstB), two transmembrane proteins (PstC and PstA) and a solute-binding protein (PstS).

Its subcellular location is the cell inner membrane. The catalysed reaction is phosphate(out) + ATP + H2O = ADP + 2 phosphate(in) + H(+). Its function is as follows. Part of the ABC transporter complex PstSACB involved in phosphate import. Responsible for energy coupling to the transport system. The polypeptide is Phosphate import ATP-binding protein PstB (Synechococcus sp. (strain CC9311)).